The primary structure comprises 313 residues: tRNA dimethylallyltransferase (313 aa).

An ATP-binding site is contributed by 11-18 (GPTACGKT). 13–18 (TACGKT) lines the substrate pocket. Interaction with substrate tRNA regions lie at residues 36–39 (DSAL), 160–164 (QRIER), and 243–248 (RCVGYR).

The protein belongs to the IPP transferase family. As to quaternary structure, monomer. The cofactor is Mg(2+).

It carries out the reaction adenosine(37) in tRNA + dimethylallyl diphosphate = N(6)-dimethylallyladenosine(37) in tRNA + diphosphate. Its function is as follows. Catalyzes the transfer of a dimethylallyl group onto the adenine at position 37 in tRNAs that read codons beginning with uridine, leading to the formation of N6-(dimethylallyl)adenosine (i(6)A). The polypeptide is tRNA dimethylallyltransferase (Neisseria meningitidis serogroup C (strain 053442)).